A 1015-amino-acid chain; its full sequence is Beta-galactosidase (1015 aa).

The active-site Proton donor is Glu-434. The active-site Nucleophile is Glu-513.

Belongs to the glycosyl hydrolase 2 family. Mg(2+) is required as a cofactor. Requires Mn(2+) as cofactor.

It catalyses the reaction Hydrolysis of terminal non-reducing beta-D-galactose residues in beta-D-galactosides.. This Arthrobacter sp. (strain B7) protein is Beta-galactosidase (lacZ).